Consider the following 34-residue polypeptide: Cytochrome c oxidase polypeptide 2A (34 aa).

Methionine 1 is modified (N-formylmethionine). A helical membrane pass occupies residues 4-34; it reads KPKGALAVILVLTLTILVFWLGVYAVFFARG.

Its subcellular location is the cell membrane. It carries out the reaction 4 Fe(II)-[cytochrome c] + O2 + 8 H(+)(in) = 4 Fe(III)-[cytochrome c] + 2 H2O + 4 H(+)(out). The protein is Cytochrome c oxidase polypeptide 2A (cbaD) of Thermus thermophilus (strain ATCC 27634 / DSM 579 / HB8).